The chain runs to 406 residues: Homocysteine-responsive endoplasmic reticulum-resident ubiquitin-like domain member 2 protein (406 aa).

The region spanning 10–89 (VTLIIKAPNQ…HMVHLVCTSR (80 aa)) is the Ubiquitin-like domain. Positions 86–156 (CTSRTPPSSP…PQAQTDPAQS (71 aa)) are disordered. Composition is skewed to low complexity over residues 87 to 98 (TSRTPPSSPKSS) and 109 to 139 (SNSN…SSSE). Polar residues predominate over residues 145 to 156 (TLPQAQTDPAQS). Residues 302-322 (FIMVMGAMLLVYLHQAGWFPF) form a helical membrane-spanning segment.

It is found in the membrane. Functionally, could be involved in the unfolded protein response (UPR) pathway. The chain is Homocysteine-responsive endoplasmic reticulum-resident ubiquitin-like domain member 2 protein (HERPUD2) from Bos taurus (Bovine).